The sequence spans 252 residues: Geranylgeranylglyceryl phosphate synthase (252 aa).

2 residues coordinate Mg(2+): Asp25 and Ser54. Residues 174 to 180 (FMDAGSG), 205 to 206 (GG), and 227 to 228 (GN) each bind sn-glycerol 1-phosphate.

This sequence belongs to the GGGP/HepGP synthase family. Group II subfamily. Homohexamer. Requires Mg(2+) as cofactor.

The catalysed reaction is sn-glycerol 1-phosphate + (2E,6E,10E)-geranylgeranyl diphosphate = sn-3-O-(geranylgeranyl)glycerol 1-phosphate + diphosphate. Functionally, prenyltransferase that catalyzes the transfer of the geranylgeranyl moiety of geranylgeranyl diphosphate (GGPP) to the C3 hydroxyl of sn-glycerol-1-phosphate (G1P). In Chitinophaga pinensis (strain ATCC 43595 / DSM 2588 / LMG 13176 / NBRC 15968 / NCIMB 11800 / UQM 2034), this protein is Geranylgeranylglyceryl phosphate synthase.